A 186-amino-acid polypeptide reads, in one-letter code: Small ribosomal subunit protein uS4 (186 aa).

Positions 106–170 (RRLQTIVYRK…SPLKDEDHPI (65 aa)) constitute an S4 RNA-binding domain. Residues 151 to 186 (EEEEVDYSPYSPLKDEDHPIRCEARGESPEETAAEE) are disordered. Residues 163-178 (LKDEDHPIRCEARGES) show a composition bias toward basic and acidic residues.

The protein belongs to the universal ribosomal protein uS4 family. Part of the 30S ribosomal subunit. Contacts protein S5. The interaction surface between S4 and S5 is involved in control of translational fidelity.

Functionally, one of the primary rRNA binding proteins, it binds directly to 16S rRNA where it nucleates assembly of the body of the 30S subunit. Its function is as follows. With S5 and S12 plays an important role in translational accuracy. In Methanopyrus kandleri (strain AV19 / DSM 6324 / JCM 9639 / NBRC 100938), this protein is Small ribosomal subunit protein uS4.